We begin with the raw amino-acid sequence, 378 residues long: Succinyl-diaminopimelate desuccinylase (378 aa).

Histidine 66 contacts Zn(2+). Aspartate 68 is a catalytic residue. Aspartate 99 provides a ligand contact to Zn(2+). Glutamate 133 functions as the Proton acceptor in the catalytic mechanism. Zn(2+) contacts are provided by glutamate 134, glutamate 162, and histidine 348.

It belongs to the peptidase M20A family. DapE subfamily. In terms of assembly, homodimer. The cofactor is Zn(2+). Co(2+) serves as cofactor.

It carries out the reaction N-succinyl-(2S,6S)-2,6-diaminopimelate + H2O = (2S,6S)-2,6-diaminopimelate + succinate. Its pathway is amino-acid biosynthesis; L-lysine biosynthesis via DAP pathway; LL-2,6-diaminopimelate from (S)-tetrahydrodipicolinate (succinylase route): step 3/3. Functionally, catalyzes the hydrolysis of N-succinyl-L,L-diaminopimelic acid (SDAP), forming succinate and LL-2,6-diaminopimelate (DAP), an intermediate involved in the bacterial biosynthesis of lysine and meso-diaminopimelic acid, an essential component of bacterial cell walls. This chain is Succinyl-diaminopimelate desuccinylase, found in Halorhodospira halophila (strain DSM 244 / SL1) (Ectothiorhodospira halophila (strain DSM 244 / SL1)).